Here is a 281-residue protein sequence, read N- to C-terminus: Very long chain fatty acid elongase 7 (281 aa).

Ala2 carries the post-translational modification N-acetylalanine. Topologically, residues 2 to 27 (AFSDLTSRTVHLYDNWIKDADPRVED) are lumenal. Residues 28-48 (WLLMSSPLPQTILLGFYVYFV) form a helical membrane-spanning segment. The Cytoplasmic segment spans residues 49–72 (TSLGPKLMENRKPFELKKAMITYN). A helical membrane pass occupies residues 73 to 93 (FFIVLFSVYMCYEFVMSGWGI). Residues 94–115 (GYSFRCDIVDYSRSPTALRMAR) lie on the Lumenal side of the membrane. The cysteines at positions 99 and 231 are disulfide-linked. Residues 116-136 (TCWLYYFSKFIELLDTIFFVL) form a helical membrane-spanning segment. Lys124, Arg137, Lys139, Gln142, and His147 together coordinate 3-oxoeicosanoyl-CoA. Topologically, residues 137 to 142 (RKKNSQ) are cytoplasmic. The chain crosses the membrane as a helical span at residues 143-162 (VTFLHVFHHTIMPWTWWFGV). Positions 147–151 (HVFHH) match the HxxHH motif motif. Residue His150 is the Nucleophile of the active site. Topologically, residues 163 to 171 (KFAAGGLGT) are lumenal. Residues 172–194 (FHALLNTAVHVVMYSYYGLSALG) form a helical membrane-spanning segment. Tyr187, Lys204, Thr208, and Gln211 together coordinate 3-oxoeicosanoyl-CoA. The Cytoplasmic segment spans residues 195 to 206 (PAYQKYLWWKKY). A helical transmembrane segment spans residues 207-227 (LTSLQLVQFVIVAIHISQFFF). At 228 to 236 (MEDCKYQFP) the chain is on the lumenal side. A helical membrane pass occupies residues 237-257 (VFACIIMSYSFMFLLLFLHFW). Residues 258–281 (YRAYTKGQRLPKTVKNGTCKNKDN) lie on the Cytoplasmic side of the membrane. Arg266 provides a ligand contact to 3-oxoeicosanoyl-CoA. Residues 277–281 (KNKDN) carry the Di-lysine motif motif.

It belongs to the ELO family. ELOVL7 subfamily. Homodimer. Interacts with TECR. In terms of tissue distribution, expressed in most tissues except heart and skeletal muscle.

Its subcellular location is the endoplasmic reticulum membrane. It catalyses the reaction a very-long-chain acyl-CoA + malonyl-CoA + H(+) = a very-long-chain 3-oxoacyl-CoA + CO2 + CoA. It carries out the reaction eicosanoyl-CoA + malonyl-CoA + H(+) = 3-oxodocosanoyl-CoA + CO2 + CoA. The enzyme catalyses (5Z,8Z,11Z,14Z)-eicosatetraenoyl-CoA + malonyl-CoA + H(+) = (7Z,10Z,13Z,16Z)-3-oxodocosatetraenoyl-CoA + CO2 + CoA. The catalysed reaction is (6Z,9Z,12Z)-octadecatrienoyl-CoA + malonyl-CoA + H(+) = (8Z,11Z,14Z)-3-oxoeicosatrienoyl-CoA + CO2 + CoA. It catalyses the reaction (9Z,12Z)-octadecadienoyl-CoA + malonyl-CoA + H(+) = (11Z,14Z)-3-oxoicosa-11,14-dienoyl-CoA + CO2 + CoA. It carries out the reaction (9Z)-octadecenoyl-CoA + malonyl-CoA + H(+) = 3-oxo-(11Z)-eicosenoyl-CoA + CO2 + CoA. The enzyme catalyses octadecanoyl-CoA + malonyl-CoA + H(+) = 3-oxoeicosanoyl-CoA + CO2 + CoA. The catalysed reaction is hexadecanoyl-CoA + malonyl-CoA + H(+) = 3-oxooctadecanoyl-CoA + CO2 + CoA. It catalyses the reaction (9Z,12Z,15Z)-octadecatrienoyl-CoA + malonyl-CoA + H(+) = (11Z,14Z,17Z)-3-oxoeicosatrienoyl-CoA + CO2 + CoA. Its pathway is lipid metabolism; fatty acid biosynthesis. Its function is as follows. Catalyzes the first and rate-limiting reaction of the four reactions that constitute the long-chain fatty acids elongation cycle. This endoplasmic reticulum-bound enzymatic process allows the addition of 2 carbons to the chain of long- and very long-chain fatty acids (VLCFAs) per cycle. Condensing enzyme with higher activity toward C18 acyl-CoAs, especially C18:3(n-3) acyl-CoAs and C18:3(n-6)-CoAs. Also active toward C20:4-, C18:0-, C18:1-, C18:2- and C16:0-CoAs, and weakly toward C20:0-CoA. Little or no activity toward C22:0-, C24:0-, or C26:0-CoAs. May participate in the production of saturated and polyunsaturated VLCFAs of different chain lengths that are involved in multiple biological processes as precursors of membrane lipids and lipid mediators. The polypeptide is Very long chain fatty acid elongase 7 (Homo sapiens (Human)).